We begin with the raw amino-acid sequence, 293 residues long: Diaminopimelate epimerase (293 aa).

Residues Asn-17, Gln-47, and Asn-67 each coordinate substrate. The active-site Proton donor is the Cys-76. Substrate is bound by residues 77–78 (GN), Asn-164, Asn-197, and 215–216 (ER). Cys-224 functions as the Proton acceptor in the catalytic mechanism. 225-226 (GS) serves as a coordination point for substrate.

Belongs to the diaminopimelate epimerase family. In terms of assembly, homodimer.

It is found in the cytoplasm. The enzyme catalyses (2S,6S)-2,6-diaminopimelate = meso-2,6-diaminopimelate. It functions in the pathway amino-acid biosynthesis; L-lysine biosynthesis via DAP pathway; DL-2,6-diaminopimelate from LL-2,6-diaminopimelate: step 1/1. Its function is as follows. Catalyzes the stereoinversion of LL-2,6-diaminopimelate (L,L-DAP) to meso-diaminopimelate (meso-DAP), a precursor of L-lysine and an essential component of the bacterial peptidoglycan. The sequence is that of Diaminopimelate epimerase from Rhodopseudomonas palustris (strain HaA2).